Here is a 200-residue protein sequence, read N- to C-terminus: Cysteine-rich venom protein VAR8 (200 aa).

Residues 1–22 (MILLKLYLTLAAILCQSRGTTS) form the signal peptide. The SCP domain maps to 41–169 (NKHNDLRRTV…PLKYFLVCQY (129 aa)). 4 disulfides stabilise this stretch: cysteine 77–cysteine 156, cysteine 95–cysteine 170, cysteine 151–cysteine 167, and cysteine 189–cysteine 196.

It belongs to the CRISP family. Contains 8 disulfide bonds. Expressed by the venom gland.

The protein resides in the secreted. In terms of biological role, blocks ryanodine receptors, and potassium channels. This Varanus acanthurus (Ridge-tailed monitor) protein is Cysteine-rich venom protein VAR8.